A 262-amino-acid chain; its full sequence is Indole-3-glycerol phosphate synthase (262 aa).

This sequence belongs to the TrpC family.

It catalyses the reaction 1-(2-carboxyphenylamino)-1-deoxy-D-ribulose 5-phosphate + H(+) = (1S,2R)-1-C-(indol-3-yl)glycerol 3-phosphate + CO2 + H2O. It functions in the pathway amino-acid biosynthesis; L-tryptophan biosynthesis; L-tryptophan from chorismate: step 4/5. The polypeptide is Indole-3-glycerol phosphate synthase (Bordetella avium (strain 197N)).